The sequence spans 55 residues: ATP synthase F(0) complex subunit 8 (55 aa).

The chain crosses the membrane as a helical span at residues 8–24 (PWFSIMVMTWLTLALLI). A disordered region spans residues 35-55 (NPPSKKPSLITKPTPWAWPWT).

This sequence belongs to the ATPase protein 8 family. As to quaternary structure, component of the ATP synthase complex composed at least of ATP5F1A/subunit alpha, ATP5F1B/subunit beta, ATP5MC1/subunit c (homooctomer), MT-ATP6/subunit a, MT-ATP8/subunit 8, ATP5ME/subunit e, ATP5MF/subunit f, ATP5MG/subunit g, ATP5MK/subunit k, ATP5MJ/subunit j, ATP5F1C/subunit gamma, ATP5F1D/subunit delta, ATP5F1E/subunit epsilon, ATP5PF/subunit F6, ATP5PB/subunit b, ATP5PD/subunit d, ATP5PO/subunit OSCP. ATP synthase complex consists of a soluble F(1) head domain (subunits alpha(3) and beta(3)) - the catalytic core - and a membrane F(0) domain - the membrane proton channel (subunits c, a, 8, e, f, g, k and j). These two domains are linked by a central stalk (subunits gamma, delta, and epsilon) rotating inside the F1 region and a stationary peripheral stalk (subunits F6, b, d, and OSCP).

It is found in the mitochondrion membrane. Its function is as follows. Subunit 8, of the mitochondrial membrane ATP synthase complex (F(1)F(0) ATP synthase or Complex V) that produces ATP from ADP in the presence of a proton gradient across the membrane which is generated by electron transport complexes of the respiratory chain. ATP synthase complex consist of a soluble F(1) head domain - the catalytic core - and a membrane F(1) domain - the membrane proton channel. These two domains are linked by a central stalk rotating inside the F(1) region and a stationary peripheral stalk. During catalysis, ATP synthesis in the catalytic domain of F(1) is coupled via a rotary mechanism of the central stalk subunits to proton translocation. In vivo, can only synthesize ATP although its ATP hydrolase activity can be activated artificially in vitro. Part of the complex F(0) domain. The chain is ATP synthase F(0) complex subunit 8 from Anas platyrhynchos (Mallard).